Consider the following 374-residue polypeptide: Ribosomal RNA large subunit methyltransferase G (374 aa).

It belongs to the methyltransferase superfamily. RlmG family.

It is found in the cytoplasm. It carries out the reaction guanosine(1835) in 23S rRNA + S-adenosyl-L-methionine = N(2)-methylguanosine(1835) in 23S rRNA + S-adenosyl-L-homocysteine + H(+). Functionally, specifically methylates the guanine in position 1835 (m2G1835) of 23S rRNA. This chain is Ribosomal RNA large subunit methyltransferase G, found in Pseudomonas putida (strain GB-1).